Here is an 812-residue protein sequence, read N- to C-terminus: Outer membrane usher protein FaeD (812 aa).

The first 35 residues, 1–35 (MKKYVTTKSVQPVAFRLTTLSLVMSAVLGSASVIA), serve as a signal peptide directing secretion. A disulfide bridge connects residues Cys793 and Cys811.

It belongs to the fimbrial export usher family.

Its subcellular location is the cell outer membrane. Functionally, involved in the export and assembly of K88ab fimbrial subunits across the outer membrane. The protein is Outer membrane usher protein FaeD (faeD) of Escherichia coli.